The chain runs to 157 residues: Endoribonuclease YbeY (157 aa).

His-123, His-127, and His-133 together coordinate Zn(2+).

This sequence belongs to the endoribonuclease YbeY family. It depends on Zn(2+) as a cofactor.

The protein localises to the cytoplasm. Single strand-specific metallo-endoribonuclease involved in late-stage 70S ribosome quality control and in maturation of the 3' terminus of the 16S rRNA. The chain is Endoribonuclease YbeY from Desulfitobacterium hafniense (strain Y51).